Consider the following 268-residue polypeptide: Ribonuclease P protein subunit p30 (268 aa).

A2 carries the post-translational modification N-acetylalanine. S251 is modified (phosphoserine).

Belongs to the eukaryotic/archaeal RNase P protein component 3 family. Component of nuclear RNase P and RNase MRP ribonucleoproteins. RNase P consists of a catalytic RNA moiety and about 10 protein subunits; POP1, POP4, POP5, POP7, RPP14, RPP21, RPP25, RPP30, RPP38 and RPP40. Within the RNase P complex, POP1, POP7 and RPP25 form the 'finger' subcomplex, POP5, RPP14, RPP40 and homodimeric RPP30 form the 'palm' subcomplex, and RPP21, POP4 and RPP38 form the 'wrist' subcomplex. All subunits of the RNase P complex interact with the catalytic RNA. Several subunits of RNase P are also part of the RNase MRP complex. RNase MRP consists of a catalytic RNA moiety and about 8 protein subunits; POP1, POP7, RPP25, RPP30, RPP38, RPP40 and possibly also POP4 and POP5.

The protein localises to the nucleus. The protein resides in the nucleolus. Its function is as follows. Component of ribonuclease P, a ribonucleoprotein complex that generates mature tRNA molecules by cleaving their 5'-ends. Also a component of the MRP ribonuclease complex, which cleaves pre-rRNA sequences. The protein is Ribonuclease P protein subunit p30 (Rpp30) of Mus musculus (Mouse).